A 145-amino-acid chain; its full sequence is Protein FimA (145 aa).

The protein belongs to the fimbrial protein family.

The protein resides in the fimbrium. The polypeptide is Protein FimA (fimA) (Bordetella pertussis).